Here is a 272-residue protein sequence, read N- to C-terminus: Phosphate import ATP-binding protein PstB (272 aa).

The region spanning 26–267 is the ABC transporter domain; sequence LEIRNLDLRY…PKKRKTEDYI (242 aa). 58–65 is a binding site for ATP; the sequence is GPSGCGKS.

Belongs to the ABC transporter superfamily. Phosphate importer (TC 3.A.1.7) family. In terms of assembly, the complex is composed of two ATP-binding proteins (PstB), two transmembrane proteins (PstC and PstA) and a solute-binding protein (PstS).

Its subcellular location is the cell inner membrane. It carries out the reaction phosphate(out) + ATP + H2O = ADP + 2 phosphate(in) + H(+). Functionally, part of the ABC transporter complex PstSACB involved in phosphate import. Responsible for energy coupling to the transport system. The protein is Phosphate import ATP-binding protein PstB of Shewanella frigidimarina (strain NCIMB 400).